Reading from the N-terminus, the 436-residue chain is 3-ketoacyl-CoA thiolase (436 aa).

Cys-99 acts as the Acyl-thioester intermediate in catalysis. Residues His-392 and Cys-422 each act as proton acceptor in the active site.

It belongs to the thiolase-like superfamily. Thiolase family. As to quaternary structure, heterotetramer of two alpha chains (FadJ) and two beta chains (FadI).

Its subcellular location is the cytoplasm. It carries out the reaction an acyl-CoA + acetyl-CoA = a 3-oxoacyl-CoA + CoA. Its pathway is lipid metabolism; fatty acid beta-oxidation. Catalyzes the final step of fatty acid oxidation in which acetyl-CoA is released and the CoA ester of a fatty acid two carbons shorter is formed. This is 3-ketoacyl-CoA thiolase from Escherichia coli O1:K1 / APEC.